A 551-amino-acid polypeptide reads, in one-letter code: Solute carrier family 22 member 27 (551 aa).

The Cytoplasmic segment spans residues 1–15 (MSFQELLNQVGSLGR). Residues 16–36 (FQILQIVFLLLLNAIVVPHIA) form a helical membrane-spanning segment. The Extracellular portion of the chain corresponds to 37-145 (MENFTAAIPN…DLVCESQALN (109 aa)). 5 N-linked (GlcNAc...) asparagine glycosylation sites follow: asparagine 39, asparagine 56, asparagine 62, asparagine 102, and asparagine 107. The helical transmembrane segment at 146 to 166 (SVTKFSFMIGLFIGGIICGHL) threads the bilayer. Over 167 to 173 (SDRLGRK) the chain is Cytoplasmic. The chain crosses the membrane as a helical span at residues 174–194 (FILTCALLQFAITETCVAFAP). Over 195 to 203 (SFFIYCSLR) the chain is Extracellular. Residues 204–224 (FLAGLSVEPILVNSHLLMLEW) form a helical membrane-spanning segment. Topologically, residues 225–234 (TSPKFLTMMA) are cytoplasmic. The chain crosses the membrane as a helical span at residues 235–255 (ALLSCAPNIGYMISAGLAFLF). The Extracellular portion of the chain corresponds to 256–258 (RIW). The helical transmembrane segment at 259-279 (HHLQLTMSVPIFFFLILTRWL) threads the bilayer. The Cytoplasmic portion of the chain corresponds to 280–348 (SESARWLIVT…LFHTSILRKR (69 aa)). The chain crosses the membrane as a helical span at residues 349 to 369 (ICVLSFMRLFFTVSIFGLAVH). Topologically, residues 370–376 (LQHLSSN) are extracellular. A helical membrane pass occupies residues 377-397 (IILLQFLISALAILVSVIGPF). At 398–405 (VLNHIGRR) the chain is on the cytoplasmic side. The chain crosses the membrane as a helical span at residues 406–426 (ITYLVLMSLRGIFILIAVFVP). The Extracellular portion of the chain corresponds to 427-432 (QEMQTL). Residues 433–453 (RIIMATLAEGISSLCVGVSRL) form a helical membrane-spanning segment. Over 454–467 (HTNELLPTTLRATA) the chain is Cytoplasmic. A helical transmembrane segment spans residues 468–488 (VGVIGFFGNSGSFLSPLFMLL). Topologically, residues 489–494 (ATYYAN) are extracellular. The chain crosses the membrane as a helical span at residues 495 to 515 (MPWIFYGGFSIFNAFTVFLLP). Topologically, residues 516 to 551 (ETKNQPLPDSTHDVGNDWKESRKGKKEDPIIKVTRF) are cytoplasmic. Residues 523–551 (PDSTHDVGNDWKESRKGKKEDPIIKVTRF) are disordered. Basic and acidic residues predominate over residues 525–545 (STHDVGNDWKESRKGKKEDPI).

This sequence belongs to the major facilitator (TC 2.A.1) superfamily. Organic cation transporter (TC 2.A.1.19) family. As to expression, expressed in proximal kidney tubules, and in liver hepatocytes (at protein level).

Its subcellular location is the cell membrane. Its function is as follows. Does not appear to have transporter activity. Functionally, sodium-independent organic anion transporter which exhibits high specificity for L-carnitine. Can also transport salicylic acid and the drug cimetidine. The sequence is that of Solute carrier family 22 member 27 from Mus musculus (Mouse).